The chain runs to 784 residues: LPS-assembly protein LptD (784 aa).

An N-terminal signal peptide occupies residues 1 to 24 (MKKRIPTLLATMIASALYSHQGLA). 2 disulfide bridges follow: cysteine 31/cysteine 724 and cysteine 173/cysteine 725.

Belongs to the LptD family. In terms of assembly, component of the lipopolysaccharide transport and assembly complex. Interacts with LptE and LptA. Post-translationally, contains two intramolecular disulfide bonds.

It localises to the cell outer membrane. Functionally, together with LptE, is involved in the assembly of lipopolysaccharide (LPS) at the surface of the outer membrane. This Salmonella typhi protein is LPS-assembly protein LptD.